Consider the following 357-residue polypeptide: Protein AAR2 homolog (357 aa).

It belongs to the AAR2 family.

This Caenorhabditis elegans protein is Protein AAR2 homolog.